The following is a 46-amino-acid chain: Mu-segestritoxin-Sf1c (46 aa).

Disulfide bonds link cysteine 3/cysteine 19, cysteine 10/cysteine 22, cysteine 18/cysteine 42, and cysteine 24/cysteine 40. The keys region for toxin activity stretch occupies residues 31–33 (RPW).

Belongs to the neurotoxin 16 (SFI) family. In terms of tissue distribution, expressed by the venom gland.

Its subcellular location is the secreted. Insecticidal toxin. It inhibits insect voltage-gated sodium channels (Nav) by partially blocking the channel pore in DUM neurons from the American cockroach, not by acting as a gating modifier. The inhibition is only partially reversible after prolonged washout. In vivo, the toxin causes flaccid paralysis followed by death when injected into Heliothis virescens larvae. It also causes uncoordinated movements followed by full paralysis to sheep blowflies (Lucilia cuprina). When the toxin is fused to snowdrop lectin, it is orally active against larvae of the tomato moth (Laconobia oleracea), the rice brown planthopper (Nilaparvata lugens), and the peach-potato aphid (Myzus persicae). This is Mu-segestritoxin-Sf1c from Segestria florentina (Tube-web spider).